A 451-amino-acid polypeptide reads, in one-letter code: Phosphoglucosamine mutase (451 aa).

S102 functions as the Phosphoserine intermediate in the catalytic mechanism. Mg(2+)-binding residues include S102, D242, D244, and D246. S102 is subject to Phosphoserine.

The protein belongs to the phosphohexose mutase family. It depends on Mg(2+) as a cofactor. In terms of processing, activated by phosphorylation.

The enzyme catalyses alpha-D-glucosamine 1-phosphate = D-glucosamine 6-phosphate. In terms of biological role, catalyzes the conversion of glucosamine-6-phosphate to glucosamine-1-phosphate. This is Phosphoglucosamine mutase from Staphylococcus saprophyticus subsp. saprophyticus (strain ATCC 15305 / DSM 20229 / NCIMB 8711 / NCTC 7292 / S-41).